A 623-amino-acid polypeptide reads, in one-letter code: UvrABC system protein C (623 aa).

Residues 27–105 (GSPGVYRMLD…IKQLKPRYNV (79 aa)) enclose the GIY-YIG domain. The region spanning 215–250 (TKVQANLAEQMQAASEAMEFERAAALRDRIKALTQV) is the UVR domain.

It belongs to the UvrC family. In terms of assembly, interacts with UvrB in an incision complex.

The protein localises to the cytoplasm. The UvrABC repair system catalyzes the recognition and processing of DNA lesions. UvrC both incises the 5' and 3' sides of the lesion. The N-terminal half is responsible for the 3' incision and the C-terminal half is responsible for the 5' incision. The protein is UvrABC system protein C of Cereibacter sphaeroides (strain ATCC 17023 / DSM 158 / JCM 6121 / CCUG 31486 / LMG 2827 / NBRC 12203 / NCIMB 8253 / ATH 2.4.1.) (Rhodobacter sphaeroides).